A 242-amino-acid chain; its full sequence is Protein fmp-52, mitochondrial (242 aa).

The N-terminal 87 residues, 1–87 (MSTSTPTSTA…VISSLGTTRV (87 aa)), are a transit peptide targeting the mitochondrion. The tract at residues 33–58 (SSQVQTISRRAPANPTNSSRLSPTVN) is disordered. Residues 35–58 (QVQTISRRAPANPTNSSRLSPTVN) show a composition bias toward polar residues.

Belongs to the FMP52 family.

It localises to the mitochondrion outer membrane. This Neurospora crassa (strain ATCC 24698 / 74-OR23-1A / CBS 708.71 / DSM 1257 / FGSC 987) protein is Protein fmp-52, mitochondrial (fmp-52).